We begin with the raw amino-acid sequence, 320 residues long: L-lactate dehydrogenase (320 aa).

Residues valine 18, aspartate 39, arginine 44, tyrosine 69, and 83-84 (GA) contribute to the NAD(+) site. Substrate is bound by residues glutamine 86 and arginine 92. Residues threonine 105, 122-124 (AAN), and serine 147 each bind NAD(+). 124 to 127 (NPVD) serves as a coordination point for substrate. Substrate is bound at residue 152–155 (DSAR). Histidine 179 (proton acceptor) is an active-site residue. Tyrosine 223 carries the post-translational modification Phosphotyrosine. A substrate-binding site is contributed by threonine 232.

This sequence belongs to the LDH/MDH superfamily. LDH family. As to quaternary structure, homotetramer.

The protein resides in the cytoplasm. It catalyses the reaction (S)-lactate + NAD(+) = pyruvate + NADH + H(+). The protein operates within fermentation; pyruvate fermentation to lactate; (S)-lactate from pyruvate: step 1/1. Catalyzes the conversion of lactate to pyruvate. This chain is L-lactate dehydrogenase, found in Pediococcus pentosaceus (strain ATCC 25745 / CCUG 21536 / LMG 10740 / 183-1w).